A 361-amino-acid chain; its full sequence is Probable cinnamyl alcohol dehydrogenase (361 aa).

Residue C48 coordinates Zn(2+). T50 is an NADP(+) binding site. H70, E71, C101, C104, C107, C115, and C164 together coordinate Zn(2+). NADP(+) is bound by residues T168, 189–194, 212–217, T252, G276, and 299–301; these read GLGGVG, SSSDKK, and SFI.

It belongs to the zinc-containing alcohol dehydrogenase family. In terms of assembly, homodimer. The cofactor is Zn(2+).

It catalyses the reaction (E)-cinnamyl alcohol + NADP(+) = (E)-cinnamaldehyde + NADPH + H(+). It carries out the reaction (E)-coniferol + NADP(+) = (E)-coniferaldehyde + NADPH + H(+). The enzyme catalyses (E)-sinapyl alcohol + NADP(+) = (E)-sinapaldehyde + NADPH + H(+). The catalysed reaction is (E)-4-coumaroyl alcohol + NADP(+) = (E)-4-coumaraldehyde + NADPH + H(+). It catalyses the reaction (E)-caffeyl alcohol + NADP(+) = (E)-caffeyl aldehyde + NADPH + H(+). Its pathway is aromatic compound metabolism; phenylpropanoid biosynthesis. Involved in lignin biosynthesis. Catalyzes the final step specific for the production of lignin monomers. Catalyzes the NADPH-dependent reduction of coniferaldehyde, 5-hydroxyconiferaldehyde, sinapaldehyde, 4-coumaraldehyde and caffeyl aldehyde to their respective alcohols. The polypeptide is Probable cinnamyl alcohol dehydrogenase (Lolium perenne (Perennial ryegrass)).